The primary structure comprises 327 residues: DNA-directed RNA polymerase subunit alpha (327 aa).

The segment at 1 to 233 is alpha N-terminal domain (alpha-NTD); the sequence is MVREKVKVST…NLFIPFLHVE (233 aa). The alpha C-terminal domain (alpha-CTD) stretch occupies residues 264–327; it reads TKELAFQYIF…KKILDILEKK (64 aa).

The protein belongs to the RNA polymerase alpha chain family. In plastids the minimal PEP RNA polymerase catalytic core is composed of four subunits: alpha, beta, beta', and beta''. When a (nuclear-encoded) sigma factor is associated with the core the holoenzyme is formed, which can initiate transcription.

The protein resides in the plastid. It localises to the chloroplast. The catalysed reaction is RNA(n) + a ribonucleoside 5'-triphosphate = RNA(n+1) + diphosphate. Functionally, DNA-dependent RNA polymerase catalyzes the transcription of DNA into RNA using the four ribonucleoside triphosphates as substrates. The protein is DNA-directed RNA polymerase subunit alpha of Capsella bursa-pastoris (Shepherd's purse).